The sequence spans 101 residues: Small ribosomal subunit protein uS14 (101 aa).

Belongs to the universal ribosomal protein uS14 family. Part of the 30S ribosomal subunit. Contacts proteins S3 and S10.

In terms of biological role, binds 16S rRNA, required for the assembly of 30S particles and may also be responsible for determining the conformation of the 16S rRNA at the A site. The protein is Small ribosomal subunit protein uS14 of Brucella abortus (strain S19).